We begin with the raw amino-acid sequence, 103 residues long: Large ribosomal subunit protein bL21 (103 aa).

The protein belongs to the bacterial ribosomal protein bL21 family. As to quaternary structure, part of the 50S ribosomal subunit. Contacts protein L20.

In terms of biological role, this protein binds to 23S rRNA in the presence of protein L20. This is Large ribosomal subunit protein bL21 from Actinobacillus pleuropneumoniae serotype 7 (strain AP76).